Reading from the N-terminus, the 90-residue chain is Small ribosomal subunit protein bS18 (90 aa).

Residues 1 to 23 (MKPMRQKNTRAQGNKSISNALAS) are disordered. The span at 9–21 (TRAQGNKSISNAL) shows a compositional bias: polar residues.

It belongs to the bacterial ribosomal protein bS18 family. As to quaternary structure, part of the 30S ribosomal subunit. Forms a tight heterodimer with protein bS6.

In terms of biological role, binds as a heterodimer with protein bS6 to the central domain of the 16S rRNA, where it helps stabilize the platform of the 30S subunit. This is Small ribosomal subunit protein bS18 from Chlorobium luteolum (strain DSM 273 / BCRC 81028 / 2530) (Pelodictyon luteolum).